Reading from the N-terminus, the 55-residue chain is uncharacterized protein (55 aa).

Residues 1–19 (MQILLVVRLVLLWLGGLSA) form the signal peptide.

This is an uncharacterized protein from Orgyia pseudotsugata multicapsid polyhedrosis virus (OpMNPV).